The sequence spans 366 residues: UDP-N-acetylglucosamine--N-acetylmuramyl-(pentapeptide) pyrophosphoryl-undecaprenol N-acetylglucosamine transferase (366 aa).

UDP-N-acetyl-alpha-D-glucosamine is bound by residues 15-17, asparagine 127, arginine 175, serine 201, isoleucine 255, and glutamine 300; that span reads TGG.

Belongs to the glycosyltransferase 28 family. MurG subfamily.

Its subcellular location is the cell inner membrane. It carries out the reaction di-trans,octa-cis-undecaprenyl diphospho-N-acetyl-alpha-D-muramoyl-L-alanyl-D-glutamyl-meso-2,6-diaminopimeloyl-D-alanyl-D-alanine + UDP-N-acetyl-alpha-D-glucosamine = di-trans,octa-cis-undecaprenyl diphospho-[N-acetyl-alpha-D-glucosaminyl-(1-&gt;4)]-N-acetyl-alpha-D-muramoyl-L-alanyl-D-glutamyl-meso-2,6-diaminopimeloyl-D-alanyl-D-alanine + UDP + H(+). It participates in cell wall biogenesis; peptidoglycan biosynthesis. Its function is as follows. Cell wall formation. Catalyzes the transfer of a GlcNAc subunit on undecaprenyl-pyrophosphoryl-MurNAc-pentapeptide (lipid intermediate I) to form undecaprenyl-pyrophosphoryl-MurNAc-(pentapeptide)GlcNAc (lipid intermediate II). In Thiobacillus denitrificans (strain ATCC 25259 / T1), this protein is UDP-N-acetylglucosamine--N-acetylmuramyl-(pentapeptide) pyrophosphoryl-undecaprenol N-acetylglucosamine transferase.